The chain runs to 215 residues: Large ribosomal subunit protein uL3 (215 aa).

The segment covering Ser131–Asn144 has biased composition (low complexity). A disordered region spans residues Ser131 to Gly150. Position 153 is an N5-methylglutamine (Gln153).

The protein belongs to the universal ribosomal protein uL3 family. In terms of assembly, part of the 50S ribosomal subunit. Forms a cluster with proteins L14 and L19. Post-translationally, methylated by PrmB.

Its function is as follows. One of the primary rRNA binding proteins, it binds directly near the 3'-end of the 23S rRNA, where it nucleates assembly of the 50S subunit. The sequence is that of Large ribosomal subunit protein uL3 from Nitrosomonas europaea (strain ATCC 19718 / CIP 103999 / KCTC 2705 / NBRC 14298).